The sequence spans 269 residues: 4-hydroxy-tetrahydrodipicolinate reductase (269 aa).

Residues 13–18 (GASGRM) and Asp-39 each bind NAD(+). Arg-40 serves as a coordination point for NADP(+). Residues 101–103 (GTT) and 125–128 (APNM) each bind NAD(+). Catalysis depends on His-158, which acts as the Proton donor/acceptor. His-159 is a binding site for (S)-2,3,4,5-tetrahydrodipicolinate. Lys-162 (proton donor) is an active-site residue. 168-169 (GT) serves as a coordination point for (S)-2,3,4,5-tetrahydrodipicolinate.

This sequence belongs to the DapB family.

It is found in the cytoplasm. The enzyme catalyses (S)-2,3,4,5-tetrahydrodipicolinate + NAD(+) + H2O = (2S,4S)-4-hydroxy-2,3,4,5-tetrahydrodipicolinate + NADH + H(+). The catalysed reaction is (S)-2,3,4,5-tetrahydrodipicolinate + NADP(+) + H2O = (2S,4S)-4-hydroxy-2,3,4,5-tetrahydrodipicolinate + NADPH + H(+). The protein operates within amino-acid biosynthesis; L-lysine biosynthesis via DAP pathway; (S)-tetrahydrodipicolinate from L-aspartate: step 4/4. In terms of biological role, catalyzes the conversion of 4-hydroxy-tetrahydrodipicolinate (HTPA) to tetrahydrodipicolinate. This chain is 4-hydroxy-tetrahydrodipicolinate reductase, found in Bordetella bronchiseptica (strain ATCC BAA-588 / NCTC 13252 / RB50) (Alcaligenes bronchisepticus).